The following is a 222-amino-acid chain: Ribonuclease 3 (222 aa).

Positions 5-127 (PIKLEKKLKL…LIGAIYLDKG (123 aa)) constitute an RNase III domain. Glutamate 41 lines the Mg(2+) pocket. Aspartate 45 is a catalytic residue. 2 residues coordinate Mg(2+): aspartate 113 and glutamate 116. Residue glutamate 116 is part of the active site. Positions 152–221 (DAKTKLQEYS…ASLCLQDIFK (70 aa)) constitute a DRBM domain.

Belongs to the ribonuclease III family. In terms of assembly, homodimer. Mg(2+) is required as a cofactor.

The protein resides in the cytoplasm. It catalyses the reaction Endonucleolytic cleavage to 5'-phosphomonoester.. In terms of biological role, digests double-stranded RNA. Involved in the processing of primary rRNA transcript to yield the immediate precursors to the large and small rRNAs (23S and 16S). Processes some mRNAs, and tRNAs when they are encoded in the rRNA operon. Processes pre-crRNA and tracrRNA of type II CRISPR loci if present in the organism. This chain is Ribonuclease 3, found in Pelagibacter ubique (strain HTCC1062).